A 621-amino-acid polypeptide reads, in one-letter code: Type 2 DNA topoisomerase 6 subunit B (621 aa).

Residues N48, D80, S101–R102, G111–S118, and K435 each bind ATP.

The protein belongs to the TOP6B family. Homodimer. Heterotetramer of two Top6A and two Top6B chains.

It carries out the reaction ATP-dependent breakage, passage and rejoining of double-stranded DNA.. In terms of biological role, relaxes both positive and negative superturns and exhibits a strong decatenase activity. The protein is Type 2 DNA topoisomerase 6 subunit B of Methanosarcina barkeri (strain Fusaro / DSM 804).